Consider the following 181-residue polypeptide: Interleukin-24 (181 aa).

An N-terminal signal peptide occupies residues 1–26; it reads MSWGLQILPCLSLILLLWNQVPGLEG. A disulfide bridge links Cys-34 with Cys-81. Asn-74 carries N-linked (GlcNAc...) asparagine glycosylation. Residue Lys-97 forms a Glycyl lysine isopeptide (Lys-Gly) (interchain with G-Cter in ubiquitin) linkage.

This sequence belongs to the IL-10 family. Post-translationally, glycosylated. In terms of processing, ubiquitination at Lys-97 promotes proteasomal degradation. As to expression, selectively expressed by Th2 cells. Expressed in the liver.

Its subcellular location is the secreted. In terms of biological role, multifunctional cytokine mainly produced by T-cells that plays a regulatory role in immune response, tissue homeostasis, host defense, and oncogenesis. Possesses antiviral functions and induces the type I interferon response during influenza infection. Signals through two receptor complexes IL20RA/IL20RB or IL20RB/IL22RA1. In turn, stimulates the JAK1-STAT3 and MAPK pathways and promotes the secretion of pro-inflammatory mediators including IL8 and MMP1. Intracellularly, maintains endoplasmic reticulum homeostasis by restricting the eIF2alpha-CHOP pathway-mediated stress signal. In addition, acts as a quality control mechanism for the ubiquitin proteasome system by alerting the cell to proteasome dysfunction through activation of PKR/EIF2AK2. This is Interleukin-24 (Il24) from Mus musculus (Mouse).